The following is a 43-amino-acid chain: Protein PsbN (43 aa).

The chain crosses the membrane as a helical span at residues 7-29 (VTIFLSGLLVSFTGYALYTAFGQ).

It belongs to the PsbN family.

It localises to the plastid. Its subcellular location is the chloroplast thylakoid membrane. May play a role in photosystem I and II biogenesis. The sequence is that of Protein PsbN from Ipomoea purpurea (Common morning glory).